Consider the following 148-residue polypeptide: Protein NrdI (148 aa).

This sequence belongs to the NrdI family.

Functionally, probably involved in ribonucleotide reductase function. This chain is Protein NrdI, found in Corynebacterium glutamicum (strain R).